Reading from the N-terminus, the 367-residue chain is 4-hydroxyphenylpyruvate dioxygenase (367 aa).

VOC domains are found at residues 3 to 135 and 166 to 324; these read GFDH…FVDR and LIDH…IFTN. The Fe cation site is built by histidine 169, histidine 252, and glutamate 335.

Belongs to the 4HPPD family. Fe cation serves as cofactor.

It catalyses the reaction 3-(4-hydroxyphenyl)pyruvate + O2 = homogentisate + CO2. It participates in amino-acid degradation; L-phenylalanine degradation; acetoacetate and fumarate from L-phenylalanine: step 3/6. Key enzyme in the degradation of tyrosine. This is 4-hydroxyphenylpyruvate dioxygenase (hpd) from Dictyostelium discoideum (Social amoeba).